A 616-amino-acid chain; its full sequence is Proline dehydrogenase 1, mitochondrial (616 aa).

This sequence belongs to the proline oxidase family. The cofactor is FAD.

The protein localises to the mitochondrion matrix. It carries out the reaction L-proline + a quinone = (S)-1-pyrroline-5-carboxylate + a quinol + H(+). The protein operates within amino-acid degradation; L-proline degradation into L-glutamate; L-glutamate from L-proline: step 1/2. Functionally, converts proline to delta-1-pyrroline-5-carboxylate. Through proline catabolism, promotes reactive oxygen species (ROS) production and the transcription of skn-1 target genes in response to bacterial infection by P.aeruginosa. In Caenorhabditis elegans, this protein is Proline dehydrogenase 1, mitochondrial.